A 303-amino-acid chain; its full sequence is Caspase-7 (303 aa).

The span at 1–21 (MADDQGCIEEQGVEDSANEDS) shows a compositional bias: acidic residues. Residues 1-30 (MADDQGCIEEQGVEDSANEDSVDAKPDRSS) form a disordered region. Ala2 is subject to N-acetylalanine. A propeptide spans 2–23 (ADDQGCIEEQGVEDSANEDSVD) (N-terminally processed). Ser30 carries the post-translational modification Phosphoserine; by PAK2. At Ser37 the chain carries Phosphoserine. The exosite stretch occupies residues 38–41 (KKKK). Positions 76–87 (KNFDKVTGMGVR) are loop L1. Residue His144 is part of the active site. Thr173 carries the post-translational modification Phosphothreonine; by PAK2. Cys186 is an active-site residue. Positions 187–196 (RGTELDDGIQ) are loop L2. The propeptide occupies 199 to 206 (SGPINDTD). Positions 226 to 238 (VPGYYSWRSPGRG) are loop L3. Residue Arg233 is modified to (Microbial infection) ADP-riboxanated arginine. Position 239 is a phosphoserine; by PAK2 (Ser239). Positions 274–288 (ESQSDDPHFHEKKQI) are loop L4.

Belongs to the peptidase C14A family. Heterotetramer that consists of two anti-parallel arranged heterodimers, each one formed by a 20 kDa (p20) and a 11 kDa (p11) subunit. Interacts with XIAP (via its second BIR domain); inhibiting CASP7 activity. Interacts with BIRC6/bruce. Interacts with ATXN3 (short isoform 1). Interacts with HSPA5. Cleavage by different proteases, such as granzyme B (GZMB), caspase-1 (CASP1), caspase-8 (CASP8), caspase-9 (CASP9) or caspase-10 (CASP10) generate the two active subunits. Its involvement in different programmed cell death processes is probably specified by the protease that activates CASP7. Cleaved and activated by initiator caspases (CASP8, CASP9 and/or CASP10), leading to execution phase of apoptosis. Cleavage and maturation by GZMB regulates granzyme-mediated programmed cell death. Cleaved and activated by CASP1 in response to bacterial infection. Propeptide domains can also be cleaved efficiently by CASP3. Active heterodimers between the small subunit of caspase-7 and the large subunit of CASP3, and vice versa, also occur. Also cleaved at the N-terminus at alternative sites by CAPN1, leading to its activation. Post-translationally, phosphorylation at Ser-30 and Ser-239 by PAK2 inhibits its activity. Phosphorylation at Ser-30 prevents cleavage and activation by initiator caspase CASP9, while phosphorylation at Ser-239 prevents thiol protease activity by preventing substrate-binding. In terms of processing, (Microbial infection) ADP-riboxanation by C.violaceum CopC blocks CASP7 processing, preventing CASP7 activation and ability to recognize and cleave substrates. Ubiquitinated by BIRC6; this activity is inhibited by DIABLO/SMAC. In terms of tissue distribution, highly expressed in lung, skeletal muscle, liver, kidney, spleen and heart, and moderately in testis. No expression in the brain.

It is found in the cytoplasm. The protein resides in the cytosol. Its subcellular location is the nucleus. The protein localises to the secreted. It localises to the extracellular space. The catalysed reaction is Strict requirement for an Asp residue at position P1 and has a preferred cleavage sequence of Asp-Glu-Val-Asp-|-.. With respect to regulation, during activation, the N-terminal disordered prodomain is removed by cleavage. Concomitantly, double cleavage gives rise to a large Caspase-7 subunit p20 and a small Caspase-7 subunit p11. The two large and two small subunits then assemble to form the active CASP7 complex. Can be cleaved and activated by different caspases, depending on the context. Cleaved and activated by initiator caspases (CASP8, CASP9 and/or CASP10), leading to execution phase of apoptosis. Inhibited by XIAP, which directly binds to the active site pocket and obstructs substrate entry. Cleavage and maturation by GZMB regulates granzyme-mediated programmed cell death. Cleavage and maturation by CASP1 regulates pyroptosis. Phosphorylation at Ser-30 and Ser-239 by PAK2 inhibits its activity. Inhibited by isatin sulfonamides. Inhibited by 2-(2,4-Dichlorophenoxy)- N-(2-mercapto-ethyl)-acetamide (DICA) and 5-Fluoro-1H-indole-2- carboxylic acid (2-mercapto-ethyl)-amide (FICA) allosteric inhibitors, which disrupt an interaction between Arg-187 and Tyr-223. Specifically inhibited by DARPin D7.18 and D7.43, which specifically bind to the precursor CASP7 and prevent its processing and activation. Inhibited by BIRC6; following inhibition of BIRC6-caspase binding by DIABLO/SMAC, BIRC6 is subjected to caspase cleavage, leading to an increase in active caspases. Its function is as follows. Thiol protease involved in different programmed cell death processes, such as apoptosis, pyroptosis or granzyme-mediated programmed cell death, by proteolytically cleaving target proteins. Has a marked preference for Asp-Glu-Val-Asp (DEVD) consensus sequences, with some plasticity for alternate non-canonical sequences. Its involvement in the different programmed cell death processes is probably determined by upstream proteases that activate CASP7. Acts as an effector caspase involved in the execution phase of apoptosis: following cleavage and activation by initiator caspases (CASP8, CASP9 and/or CASP10), mediates execution of apoptosis by catalyzing cleavage of proteins, such as CLSPN, PARP1, PTGES3 and YY1. Compared to CASP3, acts as a minor executioner caspase and cleaves a limited set of target proteins. Acts as a key regulator of the inflammatory response in response to bacterial infection by catalyzing cleavage and activation of the sphingomyelin phosphodiesterase SMPD1 in the extracellular milieu, thereby promoting membrane repair. Regulates pyroptosis in intestinal epithelial cells: cleaved and activated by CASP1 in response to S.typhimurium infection, promoting its secretion to the extracellular milieu, where it catalyzes activation of SMPD1, generating ceramides that repair membranes and counteract the action of gasdermin-D (GSDMD) pores. Regulates granzyme-mediated programmed cell death in hepatocytes: cleaved and activated by granzyme B (GZMB) in response to bacterial infection, promoting its secretion to the extracellular milieu, where it catalyzes activation of SMPD1, generating ceramides that repair membranes and counteract the action of perforin (PRF1) pores. Following cleavage by CASP1 in response to inflammasome activation, catalyzes processing and inactivation of PARP1, alleviating the transcription repressor activity of PARP1. Acts as an inhibitor of type I interferon production during virus-induced apoptosis by mediating cleavage of antiviral proteins CGAS, IRF3 and MAVS, thereby preventing cytokine overproduction. Cleaves and activates sterol regulatory element binding proteins (SREBPs). Cleaves phospholipid scramblase proteins XKR4, XKR8 and XKR9. In case of infection, catalyzes cleavage of Kaposi sarcoma-associated herpesvirus protein ORF57, thereby preventing expression of viral lytic genes. Cleaves BIRC6 following inhibition of BIRC6-caspase binding by DIABLO/SMAC. Lacks enzymatic activity. This chain is Caspase-7, found in Homo sapiens (Human).